A 445-amino-acid polypeptide reads, in one-letter code: Tyrosine--tRNA ligase, mitochondrial (445 aa).

Y33 is a binding site for L-tyrosine. D37 is a binding site for ATP. The 'HIGH' region motif lies at 38-47 (PTAASLHVGN). L-tyrosine contacts are provided by D77, Y184, Q188, D191, and Q210. Positions 245–249 (KLGKS) match the 'KMSKS' region motif. K248 is a binding site for ATP. In terms of domain architecture, S4 RNA-binding spans 384–445 (QPFSRLLRTL…GKRTFVLDSL (62 aa)).

The protein belongs to the class-I aminoacyl-tRNA synthetase family. As to quaternary structure, homodimer.

The protein localises to the mitochondrion matrix. The catalysed reaction is tRNA(Tyr) + L-tyrosine + ATP = L-tyrosyl-tRNA(Tyr) + AMP + diphosphate + H(+). Catalyzes the attachment of tyrosine to tRNA(Tyr) in a two-step reaction: tyrosine is first activated by ATP to form Tyr-AMP and then transferred to the acceptor end of tRNA(Tyr). In Schizosaccharomyces pombe (strain 972 / ATCC 24843) (Fission yeast), this protein is Tyrosine--tRNA ligase, mitochondrial.